Consider the following 82-residue polypeptide: uncharacterized protein (82 aa).

It is found in the plastid. It localises to the chloroplast. This is an uncharacterized protein from Vicia faba (Broad bean).